Consider the following 182-residue polypeptide: FMN reductase (NADH) RutF (182 aa).

The protein belongs to the non-flavoprotein flavin reductase family. RutF subfamily.

The enzyme catalyses FMNH2 + NAD(+) = FMN + NADH + 2 H(+). Its function is as follows. Catalyzes the reduction of FMN to FMNH2 which is used to reduce pyrimidine by RutA via the Rut pathway. The polypeptide is FMN reductase (NADH) RutF (Yersinia enterocolitica serotype O:8 / biotype 1B (strain NCTC 13174 / 8081)).